The primary structure comprises 834 residues: MSLTRRQFAKANAAAIAATVAGMPIASTASNLVTEADATNLKWDKAPCRFCGTGCGVMVATRENRVVATHGDVKADVNRGINCVKGYFLSKIMYGTDRLTQPLLRMKDGKFDKQGEFQPVTWDQAFDIMEEKYKAALKAGGPEAIGMFGSGQWTIWEGYAANKLMKAGFRSNNIDPNARHCMASAAFGFMRTFGMDEPMGCYEDIEAADAFVLWGSNMAEMHPVLWTRLTDRRLSAPHVKVAVMSTFEHRSFELADIPMIFNPQTDLVILNYIANHIIQSGAVNKEFIDKHTRFAKGATNIGYGLRPTDPLELKAENAAVANTWTDIGYEDYVEFLKPYTLEHAAKESGVPAERLKALAELYADPKVKVMSFWTMGFNQHTRGVWANNMIYNIHLLTGKISEPGNSPFSLTGQPSACGTAREVGTFSHRLPADMAVTNPKHRAITEKIWKLPEGTIQEKPGFHAVDQSRKLKDGVLKVYWTQVTNNMQAGPNVMQEILPGWRNPETFVIVSDVYPTVSAQAADLILPSAMWVEKEGAYGNAERRTQFWHQLVTAPGEARSDLWQLVEFSKRFRVDEVWPAELLSKAPEFKDKTLFDVLFKNGQVDRFSNDEIAEGYANYEAEAFGFYLQKGLFEEYAEFGRGHAHDLAAFDVYHRERGLRWPVVDEKETQWRYREGYDPYVEAGSGVQFYGNADKKAIIFALPYEVPAEVPDEEYPFWLSTGRVLEHWHTGSMTQRVDELHKAVPDALVYMHPEDARKLNVRRGSVVKIVSRRGEMQGRVETRGRNKPPMGLVYVPFFDANKLINKVTLDATDPISKQTDFKKCAVKIEVVSIA.

The segment at residues 1 to 29 (MSLTRRQFAKANAAAIAATVAGMPIASTA) is a signal peptide (tat-type signal). The 4Fe-4S Mo/W bis-MGD-type domain maps to 41–97 (LKWDKAPCRFCGTGCGVMVATRENRVVATHGDVKADVNRGINCVKGYFLSKIMYGTD). Residues C48, C51, C55, and C83 each contribute to the [4Fe-4S] cluster site. Mo-bis(molybdopterin guanine dinucleotide) is bound by residues K85, Q152, N177, C181, 214-221 (WGSNMAEM), 245-249 (STFEH), 264-266 (QTD), M375, Q379, N485, 511-512 (SD), K534, D561, and 721-730 (TGRVLEHWHT). F797 contacts substrate. 2 residues coordinate Mo-bis(molybdopterin guanine dinucleotide): N805 and K822.

The protein belongs to the prokaryotic molybdopterin-containing oxidoreductase family. NasA/NapA/NarB subfamily. In terms of assembly, component of the periplasmic nitrate reductase NapAB complex composed of NapA and NapB. It depends on [4Fe-4S] cluster as a cofactor. Mo-bis(molybdopterin guanine dinucleotide) is required as a cofactor. Post-translationally, predicted to be exported by the Tat system. The position of the signal peptide cleavage has not been experimentally proven.

It localises to the periplasm. It carries out the reaction 2 Fe(II)-[cytochrome] + nitrate + 2 H(+) = 2 Fe(III)-[cytochrome] + nitrite + H2O. Catalytic subunit of the periplasmic nitrate reductase complex NapAB. Receives electrons from NapB and catalyzes the reduction of nitrate to nitrite. The protein is Periplasmic nitrate reductase of Stutzerimonas stutzeri (Pseudomonas stutzeri).